The chain runs to 317 residues: Protoheme IX farnesyltransferase (317 aa).

A run of 8 helical transmembrane segments spans residues 25 to 45 (FFAL…LVGM), 54 to 74 (PVIA…SGCL), 126 to 146 (LAAG…SMWL), 154 to 174 (IVIG…VVTG), 181 to 201 (LVLF…LALV), 227 to 244 (IVAY…PVAL), 249 to 271 (LIYG…QVYH), and 281 to 301 (AAMG…SALL).

This sequence belongs to the UbiA prenyltransferase family. Protoheme IX farnesyltransferase subfamily.

The protein resides in the cell inner membrane. The enzyme catalyses heme b + (2E,6E)-farnesyl diphosphate + H2O = Fe(II)-heme o + diphosphate. It participates in porphyrin-containing compound metabolism; heme O biosynthesis; heme O from protoheme: step 1/1. Its function is as follows. Converts heme B (protoheme IX) to heme O by substitution of the vinyl group on carbon 2 of heme B porphyrin ring with a hydroxyethyl farnesyl side group. In Methylobacterium sp. (strain 4-46), this protein is Protoheme IX farnesyltransferase.